The primary structure comprises 230 residues: MKNPMLEAVSLVLEKLLFISYFKFFSSGAPGQDKAGNTLYEISSFLRGDVLEVPRTHLTHYGIYLGDNRVAHMMPDILLALTDDKGRTQKVVSNKRLILGVIGRVASIRVDTVEDFAYGAEILVNHLDRSLKKKALLNEEVAQRAEKLLGITPYSLLWNNCEHFVTYCRYGTPISPQADKFCENVKIIIRDQRSVLASAVLGLASIFCLGLTSYTTLPAIFIPFLLWMAG.

Residues 1–194 (MKNPMLEAVS…VKIIIRDQRS (194 aa)) lie on the Cytoplasmic side of the membrane. The LRAT domain maps to 50-177 (VLEVPRTHLT…CRYGTPISPQ (128 aa)). Catalysis depends on residues H60 and H72. Catalysis depends on C161, which acts as the Acyl-thioester intermediate. Residues 195–215 (VLASAVLGLASIFCLGLTSYT) form a helical membrane-spanning segment. Residues 216–230 (TLPAIFIPFLLWMAG) lie on the Lumenal side of the membrane.

Belongs to the H-rev107 family.

The protein resides in the endoplasmic reticulum membrane. It is found in the rough endoplasmic reticulum. It localises to the endosome. Its subcellular location is the multivesicular body. The protein localises to the cytoplasm. The protein resides in the perinuclear region. The enzyme catalyses all-trans-retinol--[retinol-binding protein] + a 1,2-diacyl-sn-glycero-3-phosphocholine = apo--[retinol-binding protein] + an all-trans-retinyl ester + a 2-acyl-sn-glycero-3-phosphocholine. It carries out the reaction 1,2-dihexadecanoyl-sn-glycero-3-phosphocholine + all-trans-retinol = all-trans-retinyl hexadecanoate + 2-hexadecanoyl-sn-glycero-3-phosphocholine. It catalyses the reaction 1,2-diheptanoyl-sn-glycero-3-phosphocholine + all-trans-retinol--[retinol-binding protein] = all-trans-retinyl heptanoate + 2-heptanoyl-sn-glycero-3-phosphocholine + apo--[retinol-binding protein]. The catalysed reaction is 1,2-dioctanoyl-sn-glycero-3-phosphocholine + all-trans-retinol--[retinol-binding protein] = 2-octanoyl-sn-glycero-3-phosphocholine + all-trans-retinyl octanoate + apo--[retinol-binding protein]. The enzyme catalyses all-trans-retinol--[retinol-binding protein] + 1,2-dihexadecanoyl-sn-glycero-3-phosphocholine = apo--[retinol-binding protein] + all-trans-retinyl hexadecanoate + 2-hexadecanoyl-sn-glycero-3-phosphocholine. It carries out the reaction 1,2-didodecanoyl-sn-glycero-3-phosphocholine + all-trans-retinol--[retinol-binding protein] = 2-dodecanoyl-sn-glycero-3-phosphocholine + all-trans-retinyl dodecanoate + apo--[retinol-binding protein]. Its pathway is cofactor metabolism; retinol metabolism. With respect to regulation, inhibited by all-trans-retinyl alpha-bromoacetate and N-boc-L-biocytinyl-11-aminoundecane chloro-methyl ketone (BACMK). In terms of biological role, transfers the acyl group from the sn-1 position of phosphatidylcholine to all-trans retinol, producing all-trans retinyl esters. Retinyl esters are storage forms of vitamin A. LRAT plays a critical role in vision. It provides the all-trans retinyl ester substrates for the isomerohydrolase which processes the esters into 11-cis-retinol in the retinal pigment epithelium; due to a membrane-associated alcohol dehydrogenase, 11 cis-retinol is oxidized and converted into 11-cis-retinaldehyde which is the chromophore for rhodopsin and the cone photopigments. Required for the survival of cone photoreceptors and correct rod photoreceptor cell morphology. The polypeptide is Lecithin retinol acyltransferase (LRAT) (Bos taurus (Bovine)).